A 93-amino-acid polypeptide reads, in one-letter code: MITPQNVFRHEFIGLNVEVINSKHEKFIGIKGIIIDETRNTIRVDTGKNEKLIPKSDVVFLFTLPQGEKVSIDGKVITARPEDRIKKKFTKIR.

This sequence belongs to the eukaryotic/archaeal RNase P protein component 1 family. In terms of assembly, consists of a catalytic RNA component and at least 4-5 protein subunits.

It localises to the cytoplasm. The catalysed reaction is Endonucleolytic cleavage of RNA, removing 5'-extranucleotides from tRNA precursor.. Its function is as follows. Part of ribonuclease P, a protein complex that generates mature tRNA molecules by cleaving their 5'-ends. The protein is Ribonuclease P protein component 1 of Methanosphaera stadtmanae (strain ATCC 43021 / DSM 3091 / JCM 11832 / MCB-3).